The chain runs to 876 residues: Alanine--tRNA ligase (876 aa).

Positions 563, 567, 665, and 669 each coordinate Zn(2+).

The protein belongs to the class-II aminoacyl-tRNA synthetase family. It depends on Zn(2+) as a cofactor.

It localises to the cytoplasm. The enzyme catalyses tRNA(Ala) + L-alanine + ATP = L-alanyl-tRNA(Ala) + AMP + diphosphate. In terms of biological role, catalyzes the attachment of alanine to tRNA(Ala) in a two-step reaction: alanine is first activated by ATP to form Ala-AMP and then transferred to the acceptor end of tRNA(Ala). Also edits incorrectly charged Ser-tRNA(Ala) and Gly-tRNA(Ala) via its editing domain. This chain is Alanine--tRNA ligase, found in Shouchella clausii (strain KSM-K16) (Alkalihalobacillus clausii).